Here is a 199-residue protein sequence, read N- to C-terminus: Shikimate kinase (199 aa).

14-19 (GSGKST) contributes to the ATP binding site. Residue serine 18 participates in Mg(2+) binding. Residues aspartate 36, arginine 60, and glycine 82 each contribute to the substrate site. Position 120 (arginine 120) interacts with ATP. Arginine 147 contributes to the substrate binding site. A disordered region spans residues 179 to 199 (YVRRAEKNQNSHSQTKKQSRK).

The protein belongs to the shikimate kinase family. As to quaternary structure, monomer. It depends on Mg(2+) as a cofactor.

The protein localises to the cytoplasm. It carries out the reaction shikimate + ATP = 3-phosphoshikimate + ADP + H(+). It participates in metabolic intermediate biosynthesis; chorismate biosynthesis; chorismate from D-erythrose 4-phosphate and phosphoenolpyruvate: step 5/7. Catalyzes the specific phosphorylation of the 3-hydroxyl group of shikimic acid using ATP as a cosubstrate. The sequence is that of Shikimate kinase from Chlorobium phaeobacteroides (strain BS1).